Consider the following 745-residue polypeptide: Elongation factor G, mitochondrial (745 aa).

Residues 1–15 (MSLITRLLTASSPLR) constitute a mitochondrion transit peptide. The tr-type G domain occupies 40–317 (DKIRNIGISA…AVLEYLPNPG (278 aa)). Residues 49–56 (AHIDSGKT), 116–120 (DTPGH), and 170–173 (NKLD) each bind GTP.

The protein belongs to the TRAFAC class translation factor GTPase superfamily. Classic translation factor GTPase family. EF-G/EF-2 subfamily.

It localises to the mitochondrion. It functions in the pathway protein biosynthesis; polypeptide chain elongation. Its function is as follows. Mitochondrial GTPase that catalyzes the GTP-dependent ribosomal translocation step during translation elongation. During this step, the ribosome changes from the pre-translocational (PRE) to the post-translocational (POST) state as the newly formed A-site-bound peptidyl-tRNA and P-site-bound deacylated tRNA move to the P and E sites, respectively. Catalyzes the coordinated movement of the two tRNA molecules, the mRNA and conformational changes in the ribosome. Essential during development as it acts as a retrograde signal from mitochondria to the nucleus to slow down cell proliferation if mitochondrial energy output is low. This chain is Elongation factor G, mitochondrial (ico), found in Drosophila ananassae (Fruit fly).